The sequence spans 455 residues: Keratin, type I cuticular Ha5 (455 aa).

The interval 1–97 (MASKCLKASF…FGEGILTGNE (97 aa)) is head. The region spanning 97-408 (EKETMQFLND…GLLDSEDCKL (312 aa)) is the IF rod domain. The tract at residues 98–132 (KETMQFLNDRLASYLEKVRQLERENAELESRIRDW) is coil 1A. Residues 133-143 (CEQQVPYLCPD) are linker 1. The segment at 144–244 (YQSYFQTIEE…HEEEVNSLRC (101 aa)) is coil 1B. The linker 12 stretch occupies residues 245 to 260 (QLGDRLNVEVDAAPPV). Residues 261-404 (DLNRVLNEMR…STYRGLLDSE (144 aa)) are coil 2. Positions 405–455 (DCKLPCNPCAPDHSPSKSCLPCLPAASCGPGTAHTTCSPRPICVSCPGSRF) are tail.

The protein belongs to the intermediate filament family.

This is Keratin, type I cuticular Ha5 from Ovis aries (Sheep).